Consider the following 260-residue polypeptide: DNA repair protein RecO (260 aa).

The protein belongs to the RecO family.

Involved in DNA repair and RecF pathway recombination. The sequence is that of DNA repair protein RecO from Streptococcus gordonii (strain Challis / ATCC 35105 / BCRC 15272 / CH1 / DL1 / V288).